Here is a 246-residue protein sequence, read N- to C-terminus: 3-oxoacyl-[acyl-carrier-protein] reductase FabG (246 aa).

NADP(+) contacts are provided by residues 11–14 (GASR), 62–63 (NV), and N89. Position 141 (S141) interacts with substrate. Y154 serves as the catalytic Proton acceptor. NADP(+)-binding positions include 154–158 (YVATK) and I187.

Belongs to the short-chain dehydrogenases/reductases (SDR) family. In terms of assembly, homotetramer.

It carries out the reaction a (3R)-hydroxyacyl-[ACP] + NADP(+) = a 3-oxoacyl-[ACP] + NADPH + H(+). It functions in the pathway lipid metabolism; fatty acid biosynthesis. Its function is as follows. Catalyzes the NADPH-dependent reduction of beta-ketoacyl-ACP substrates to beta-hydroxyacyl-ACP products, the first reductive step in the elongation cycle of fatty acid biosynthesis. The chain is 3-oxoacyl-[acyl-carrier-protein] reductase FabG (fabG) from Staphylococcus aureus (strain Mu50 / ATCC 700699).